Reading from the N-terminus, the 477-residue chain is Tyrosine-protein kinase transforming protein Fes (477 aa).

The segment at 49–76 (GEPPPVLLLQDDRHSTSSSEQEREGGRT) is disordered. The segment covering 58–74 (QDDRHSTSSSEQEREGG) has biased composition (basic and acidic residues). Residues 115 to 204 (WYHGALPRAE…KSGIVLNRAV (90 aa)) enclose the SH2 domain. A Protein kinase domain is found at 216-477 (LVLGEQIGRG…ELQSIRKRHR (262 aa)). Residues 222 to 230 (IGRGNFGEV) and Lys245 contribute to the ATP site. The active-site Proton acceptor is the Asp338. Tyr368 carries the phosphotyrosine; by autocatalysis modification.

This sequence belongs to the protein kinase superfamily. Tyr protein kinase family. Fes/fps subfamily.

The catalysed reaction is L-tyrosyl-[protein] + ATP = O-phospho-L-tyrosyl-[protein] + ADP + H(+). The sequence is that of Tyrosine-protein kinase transforming protein Fes (V-FES) from Feline sarcoma virus (strain Snyder-Theilen).